The chain runs to 286 residues: Single myb histone 5 (286 aa).

An HTH myb-type domain is found at 1-61 (MGAPKQRWTS…KWRNMNVIVT (61 aa)). The H-T-H motif DNA-binding region spans 28-57 (WRMILNDPELSSTLRYRSNVDLKDKWRNMN). In terms of domain architecture, H15 spans 122–190 (SHSRLDNIIM…KVNRKYRIAP (69 aa)). A coiled-coil region spans residues 229–277 (EAAAAAAAHAVAEAEAIMAEAEAAAREAEAAEAEARAAQAFAEAAVLTL).

It belongs to the histone H1/H5 family. SMH subfamily. Forms a homodimer and heterodimers.

Its subcellular location is the nucleus. The protein resides in the chromosome. The protein localises to the nucleolus. It localises to the telomere. In terms of biological role, binds preferentially double-stranded telomeric repeats, but may also bind to the single telomeric strand. The chain is Single myb histone 5 (SMH5) from Zea mays (Maize).